Consider the following 124-residue polypeptide: UPF0382 membrane protein HI_1073 (124 aa).

The next 3 helical transmembrane spans lie at 6–26, 70–90, and 95–115; these read LTLV…AAHG, SMSS…ALAF, and VIVW…ISLA.

It belongs to the UPF0382 family.

It localises to the cell membrane. In Haemophilus influenzae (strain ATCC 51907 / DSM 11121 / KW20 / Rd), this protein is UPF0382 membrane protein HI_1073.